We begin with the raw amino-acid sequence, 438 residues long: Transposon Ty2-B Gag polyprotein (438 aa).

3 stretches are compositionally biased toward polar residues: residues 1–11 (MESQQLHQNPH), 19–39 (ASVT…SASN), and 49–60 (KVNSQQETTPGT). Disordered stretches follow at residues 1–88 (MESQ…YQQH), 364–397 (KNVS…AKAH), and 419–438 (SSQY…TERI). Residues 295–397 (ENNINVSDRL…SSKPRAAKAH (103 aa)) are RNA-binding. Over residues 369-381 (TSPNTTNTKVTTR) the composition is skewed to low complexity.

As to quaternary structure, homotrimer.

It localises to the cytoplasm. Functionally, capsid protein (CA) is the structural component of the virus-like particle (VLP), forming the shell that encapsulates the retrotransposons dimeric RNA genome. The particles are assembled from trimer-clustered units and there are holes in the capsid shells that allow for the diffusion of macromolecules. CA also has nucleocapsid-like chaperone activity, promoting primer tRNA(i)-Met annealing to the multipartite primer-binding site (PBS), dimerization of Ty2 RNA and initiation of reverse transcription. The protein is Transposon Ty2-B Gag polyprotein (TY2A-B) of Saccharomyces cerevisiae (strain ATCC 204508 / S288c) (Baker's yeast).